The sequence spans 599 residues: Elongation factor 4 (599 aa).

The tr-type G domain maps to 4–186; it reads EHIRNFSIIA…EIVKKIPPPQ (183 aa). GTP-binding positions include 16 to 21 and 133 to 136; these read DHGKST and NKID.

Belongs to the TRAFAC class translation factor GTPase superfamily. Classic translation factor GTPase family. LepA subfamily.

Its subcellular location is the cell inner membrane. The catalysed reaction is GTP + H2O = GDP + phosphate + H(+). In terms of biological role, required for accurate and efficient protein synthesis under certain stress conditions. May act as a fidelity factor of the translation reaction, by catalyzing a one-codon backward translocation of tRNAs on improperly translocated ribosomes. Back-translocation proceeds from a post-translocation (POST) complex to a pre-translocation (PRE) complex, thus giving elongation factor G a second chance to translocate the tRNAs correctly. Binds to ribosomes in a GTP-dependent manner. This chain is Elongation factor 4, found in Geobacter sp. (strain M21).